A 148-amino-acid polypeptide reads, in one-letter code: UPF0756 membrane protein CKO_01811 (148 aa).

4 consecutive transmembrane segments (helical) span residues 14 to 34 (ALGF…LIIV), 51 to 71 (LTVG…SGSL), 86 to 106 (LVAI…VTLM), and 121 to 141 (VLGV…AGLV).

The protein belongs to the UPF0756 family.

Its subcellular location is the cell membrane. In Citrobacter koseri (strain ATCC BAA-895 / CDC 4225-83 / SGSC4696), this protein is UPF0756 membrane protein CKO_01811.